The sequence spans 246 residues: tRNA (guanine-N(1)-)-methyltransferase (246 aa).

S-adenosyl-L-methionine-binding positions include glycine 114 and isoleucine 134–leucine 139. Residues leucine 219 to alanine 231 are compositionally biased toward basic and acidic residues. Positions leucine 219–arginine 246 are disordered.

Belongs to the RNA methyltransferase TrmD family. As to quaternary structure, homodimer.

The protein resides in the cytoplasm. The enzyme catalyses guanosine(37) in tRNA + S-adenosyl-L-methionine = N(1)-methylguanosine(37) in tRNA + S-adenosyl-L-homocysteine + H(+). Its function is as follows. Specifically methylates guanosine-37 in various tRNAs. This chain is tRNA (guanine-N(1)-)-methyltransferase, found in Rhizorhabdus wittichii (strain DSM 6014 / CCUG 31198 / JCM 15750 / NBRC 105917 / EY 4224 / RW1) (Sphingomonas wittichii).